Consider the following 230-residue polypeptide: Lactate utilization protein C (230 aa).

It belongs to the LutC/YkgG family.

Its function is as follows. Is involved in L-lactate degradation and allows cells to grow with lactate as the sole carbon source. In Exiguobacterium sp. (strain ATCC BAA-1283 / AT1b), this protein is Lactate utilization protein C.